We begin with the raw amino-acid sequence, 95 residues long: uncharacterized protein (95 aa).

Positions 60 to 89 (VKNMINRIVEELDKRIDEIKEGLNELEKSG) form a coiled coil.

This is an uncharacterized protein from Sulfolobus islandicus filamentous virus (isolate Iceland/Hveragerdi) (SIFV).